A 443-amino-acid chain; its full sequence is Eukaryotic translation initiation factor 5 (443 aa).

29–36 (GRGNGIKT) lines the GTP pocket. Residues 147–178 (PEVKKGSKDKKAMRRAEKERLKEGEAADEELK) are compositionally biased toward basic and acidic residues. Disordered regions lie at residues 147-244 (PEVK…LTDT) and 271-293 (EPEK…NSKN). Residues 179–188 (KVKKEVKKKG) are compositionally biased toward basic residues. The span at 207-227 (SGSDEDRRSPTHKQIEEKEEA) shows a compositional bias: basic and acidic residues. The span at 228-237 (KDEDDDDDDG) shows a compositional bias: acidic residues. Over residues 280–291 (SNQNGGSQNGNS) the composition is skewed to low complexity. The W2 domain occupies 284–443 (GGSQNGNSKN…QNAESESDEE (160 aa)).

The protein belongs to the eIF-2-beta/eIF-5 family.

Catalyzes the hydrolysis of GTP bound to the 40S ribosomal initiation complex (40S.mRNA.Met-tRNA[F].eIF-2.GTP) with the subsequent joining of a 60S ribosomal subunit resulting in the release of eIF-2 and the guanine nucleotide. The subsequent joining of a 60S ribosomal subunit results in the formation of a functional 80S initiation complex (80S.mRNA.Met-tRNA[F]). The sequence is that of Eukaryotic translation initiation factor 5 (EIF5) from Phaseolus vulgaris (Kidney bean).